Here is a 255-residue protein sequence, read N- to C-terminus: Isoprenyl transferase (255 aa).

Asp-35 is an active-site residue. A Mg(2+)-binding site is contributed by Asp-35. Substrate-binding positions include 36–39, Trp-40, Arg-48, His-52, and 80–82; these read GNGR and STE. Asn-83 serves as the catalytic Proton acceptor. Substrate contacts are provided by residues Trp-84, Arg-86, Arg-203, and 209–211; that span reads RIS. Glu-222 contacts Mg(2+).

It belongs to the UPP synthase family. Homodimer. Mg(2+) serves as cofactor.

Functionally, catalyzes the condensation of isopentenyl diphosphate (IPP) with allylic pyrophosphates generating different type of terpenoids. The polypeptide is Isoprenyl transferase (Clostridium tetani (strain Massachusetts / E88)).